We begin with the raw amino-acid sequence, 121 residues long: Protein TusC (121 aa).

Belongs to the DsrF/TusC family. In terms of assembly, heterohexamer, formed by a dimer of trimers. The hexameric TusBCD complex contains 2 copies each of TusB, TusC and TusD. The TusBCD complex interacts with TusE.

Its subcellular location is the cytoplasm. In terms of biological role, part of a sulfur-relay system required for 2-thiolation of 5-methylaminomethyl-2-thiouridine (mnm(5)s(2)U) at tRNA wobble positions. This chain is Protein TusC, found in Yersinia enterocolitica serotype O:8 / biotype 1B (strain NCTC 13174 / 8081).